The following is a 579-amino-acid chain: Alpha-longipinene synthase (579 aa).

Residues Asp332, Asp336, Asp476, and Asn484 each coordinate Mg(2+). Positions 332 to 336 (DDLYD) match the DDXXD motif motif.

It belongs to the terpene synthase family. Tpsd subfamily. The cofactor is Mg(2+). It depends on Mn(2+) as a cofactor.

The catalysed reaction is (2E,6E)-farnesyl diphosphate = alpha-longipinene + diphosphate. The protein operates within sesquiterpene biosynthesis. It participates in terpene metabolism; oleoresin biosynthesis. In terms of biological role, terpene synthase (TPS) involved in the biosynthesis of sesquiterpene natural products included in conifer oleoresin secretions and volatile emissions; these compounds contribute to biotic and abiotic stress defense against herbivores and pathogens. Catalyzes the conversion of (2E,6E)-farnesyl diphosphate (FPP) to alpha-longipinene. The polypeptide is Alpha-longipinene synthase (Picea sitchensis (Sitka spruce)).